The following is a 287-amino-acid chain: Cyclopropane mycolic acid synthase 1 (287 aa).

S-adenosyl-L-methionine-binding positions include 33-34, 68-76, 94-99, and 123-124; these read YS, LLDVGCGWG, TLSKNQ, and WE. The active site involves Cys-269.

The protein belongs to the CFA/CMAS family. As to quaternary structure, homodimer.

Its subcellular location is the cytoplasm. The enzyme catalyses a 1-acyl-2-(9Z)-enoyl-sn-glycero-3-phospholipid + S-adenosyl-L-methionine = a 1-acyl-2-(9-cyclopronane)-acyl-sn-glycero-3-phospholipid + S-adenosyl-L-homocysteine + H(+). It functions in the pathway lipid metabolism; mycolic acid biosynthesis. Its function is as follows. Catalyzes the conversion of a double bond to a cyclopropane ring at the distal position of an alpha mycolic acid via the transfer of a methylene group from S-adenosyl-L-methionine. Cyclopropanated mycolic acids are key factors participating in cell envelope permeability, host immunomodulation and persistence. The chain is Cyclopropane mycolic acid synthase 1 (cmaA1) from Mycobacterium tuberculosis (strain CDC 1551 / Oshkosh).